Here is a 122-residue protein sequence, read N- to C-terminus: NADPH-dependent 7-cyano-7-deazaguanine reductase (122 aa).

Catalysis depends on Cys34, which acts as the Thioimide intermediate. Asp41 functions as the Proton donor in the catalytic mechanism. Residues 56-58 (VEL) and 75-76 (HE) contribute to the substrate site.

This sequence belongs to the GTP cyclohydrolase I family. QueF type 1 subfamily.

The protein localises to the cytoplasm. It carries out the reaction 7-aminomethyl-7-carbaguanine + 2 NADP(+) = 7-cyano-7-deazaguanine + 2 NADPH + 3 H(+). It participates in tRNA modification; tRNA-queuosine biosynthesis. Its function is as follows. Catalyzes the NADPH-dependent reduction of 7-cyano-7-deazaguanine (preQ0) to 7-aminomethyl-7-deazaguanine (preQ1). In Anaeromyxobacter dehalogenans (strain 2CP-1 / ATCC BAA-258), this protein is NADPH-dependent 7-cyano-7-deazaguanine reductase.